The primary structure comprises 292 residues: MAQPPPDVEGDDCLPAYRHLFCPDLLRDKVAFITGGGSGIGFRIAEIFMRHGCHTVIASRSLPRVLTAARKLAGATGRRCLPLSMDVRAPPAIVAAVDQALKEFGRIDILINCAAGNFLCPAGALSFNAFKTVMDIDTSGTFNVSRVLYEKFFRDHGGVIVNITATLGNRGQALQVHAGSAKAAVDAMTRHLAVEWGPQNIRVNSLAPGPISGTEGLRRLGGPQASLSTKVTASPLQRLGNKTEIAHSVLYLASPLASYVTGAVLVADGGAWLTFPNDVKGLADFASFSAKL.

Residue alanine 2 is modified to N-acetylalanine. NADP(+) contacts are provided by residues glycine 35 to isoleucine 40, arginine 60 to arginine 64, and aspartate 86. Position 60 (arginine 60) interacts with substrate. Residues arginine 88, phenylalanine 118, and serine 126–asparagine 128 contribute to the substrate site. Lysine 151 carries the post-translational modification N6-acetyllysine. NADP(+)-binding positions include lysine 182 and proline 208 to threonine 214. Arginine 219 provides a ligand contact to substrate. A Phosphoserine modification is found at serine 287. The short motif at alanine 290–leucine 292 is the Microbody targeting signal element. An N6-acetyllysine modification is found at lysine 291.

This sequence belongs to the short-chain dehydrogenases/reductases (SDR) family. 2,4-dienoyl-CoA reductase subfamily. In terms of assembly, monomer, dimer and oligomer.

It is found in the peroxisome. It catalyses the reaction a (2E,4Z)-dienoyl-CoA + NADPH + H(+) = a 4,5-saturated-(3E)-enoyl-CoA + NADP(+). The enzyme catalyses a (2E,4E)-dienoyl-CoA + NADPH + H(+) = a 4,5-saturated-(3E)-enoyl-CoA + NADP(+). It carries out the reaction (2E,4E)-hexadienoyl-CoA + NADPH + H(+) = (3E)-hexenoyl-CoA + NADP(+). The catalysed reaction is (2E,4E)-decadienoyl-CoA + NADPH + H(+) = (3E)-decenoyl-CoA + NADP(+). It catalyses the reaction (2E,4Z,7Z,10Z,13Z,16Z,19Z)-docosaheptaenoyl-CoA + NADPH + H(+) = (3E,7Z,10Z,13Z,16Z,19Z)-docosahexaenoyl-CoA + NADP(+). Its function is as follows. Auxiliary enzyme of beta-oxidation. Participates in the degradation of unsaturated fatty enoyl-CoA esters having double bonds in both even- and odd-numbered positions in peroxisome. Catalyzes the NADP-dependent reduction of 2,4-dienoyl-CoA to yield trans-3-enoyl-CoA. Has activity towards short and medium chain 2,4-dienoyl-CoAs, but also towards 2,4,7,10,13,16,19-docosaheptaenoyl-CoA, suggesting that it does not constitute a rate limiting step in the peroxisomal degradation of docosahexaenoic acid. The sequence is that of Peroxisomal 2,4-dienoyl-CoA reductase [(3E)-enoyl-CoA-producing] (DECR2) from Pongo abelii (Sumatran orangutan).